We begin with the raw amino-acid sequence, 443 residues long: Ribosomal protein uS12 methylthiotransferase RimO (443 aa).

The MTTase N-terminal domain occupies 8-118; the sequence is PKVGFVSLGC…VVNAVHEVVP (111 aa). The [4Fe-4S] cluster site is built by C17, C53, C82, C151, C155, and C158. A Radical SAM core domain is found at 137-375; the sequence is LTPRHYAYLK…MAHQQAISAA (239 aa). One can recognise a TRAM domain in the interval 378–443; the sequence is QQRIGKEIEV…DEYDMWAEPI (66 aa).

Belongs to the methylthiotransferase family. RimO subfamily. [4Fe-4S] cluster serves as cofactor.

It is found in the cytoplasm. It carries out the reaction L-aspartate(89)-[ribosomal protein uS12]-hydrogen + (sulfur carrier)-SH + AH2 + 2 S-adenosyl-L-methionine = 3-methylsulfanyl-L-aspartate(89)-[ribosomal protein uS12]-hydrogen + (sulfur carrier)-H + 5'-deoxyadenosine + L-methionine + A + S-adenosyl-L-homocysteine + 2 H(+). Catalyzes the methylthiolation of an aspartic acid residue of ribosomal protein uS12. In Pseudomonas entomophila (strain L48), this protein is Ribosomal protein uS12 methylthiotransferase RimO.